The primary structure comprises 170 residues: Guided entry of tail-anchored proteins factor 1 (170 aa).

At 1–6 (MAAGFN) the chain is on the lumenal side. Residues 7–27 (WFLVLSSVFLCNLVKTFLPSI) traverse the membrane as a helical segment. Topologically, residues 28-96 (SSFLSKIFHK…KSRTAQQAKM (69 aa)) are cytoplasmic. Positions 35–93 (FHKDADQEMEMRTEIQNMKMELSTISMMDEFARYARLERKINKMTDQLKTLVKSRTAQQ) are interaction with GET3/TRC40. Residues 61-91 (MMDEFARYARLERKINKMTDQLKTLVKSRTA) are a coiled coil. A helical membrane pass occupies residues 97 to 117 (KWIVNIAFYILQAALMISLIL). Over 118-137 (KYYADPVTVVPSKWIAPLER) the chain is Lumenal. Residues 138-158 (LVAFPSGVAGGVGITCWLVVC) form a helical membrane-spanning segment. Residues 159–170 (NKVVALILQAVS) lie on the Cytoplasmic side of the membrane.

Belongs to the WRB/GET1 family. As to quaternary structure, component of the Golgi to ER traffic (GET) complex, which is composed of GET1/WRB, CAMLG/GET2 and GET3/TRC40. Within the complex, GET1 and CAMLG form a heterotetramer which is stabilized by phosphatidylinositol binding and which binds to the GET3 homodimer.

It is found in the endoplasmic reticulum membrane. Functionally, required for the post-translational delivery of tail-anchored (TA) proteins to the endoplasmic reticulum (ER). Together with CAMLG/GET2, acts as a membrane receptor for soluble GET3/TRC40, which recognizes and selectively binds the transmembrane domain of TA proteins in the cytosol. Required to ensure correct topology and ER insertion of CAMLG. This Danio rerio (Zebrafish) protein is Guided entry of tail-anchored proteins factor 1.